The chain runs to 904 residues: Phosphoenolpyruvate carboxylase (904 aa).

Catalysis depends on residues histidine 151 and lysine 570.

This sequence belongs to the PEPCase type 1 family. It depends on Mg(2+) as a cofactor.

It catalyses the reaction oxaloacetate + phosphate = phosphoenolpyruvate + hydrogencarbonate. In terms of biological role, forms oxaloacetate, a four-carbon dicarboxylic acid source for the tricarboxylic acid cycle. The polypeptide is Phosphoenolpyruvate carboxylase (Xanthomonas campestris pv. campestris (strain 8004)).